The chain runs to 101 residues: Biogenesis of lysosome-related organelles complex 1 subunit SNN1 (101 aa).

A coiled-coil region spans residues 62 to 100; the sequence is DSNEYKAQFKEVNNLQKRLQKITLRLKDLERRSSQLTTS.

The protein belongs to the SNAPIN family. Component of the biogenesis of lysosome-related organelles complex-1 (BLOC-1).

The protein localises to the endosome. Functionally, component of the biogenesis of lysosome-related organelles complex-1 (BLOC-1), a complex involved in endosomal cargo sorting. The chain is Biogenesis of lysosome-related organelles complex 1 subunit SNN1 (SNN1) from Candida glabrata (strain ATCC 2001 / BCRC 20586 / JCM 3761 / NBRC 0622 / NRRL Y-65 / CBS 138) (Yeast).